We begin with the raw amino-acid sequence, 483 residues long: Aspartyl/glutamyl-tRNA(Asn/Gln) amidotransferase subunit B (483 aa).

The protein belongs to the GatB/GatE family. GatB subfamily. As to quaternary structure, heterotrimer of A, B and C subunits.

The enzyme catalyses L-glutamyl-tRNA(Gln) + L-glutamine + ATP + H2O = L-glutaminyl-tRNA(Gln) + L-glutamate + ADP + phosphate + H(+). The catalysed reaction is L-aspartyl-tRNA(Asn) + L-glutamine + ATP + H2O = L-asparaginyl-tRNA(Asn) + L-glutamate + ADP + phosphate + 2 H(+). Functionally, allows the formation of correctly charged Asn-tRNA(Asn) or Gln-tRNA(Gln) through the transamidation of misacylated Asp-tRNA(Asn) or Glu-tRNA(Gln) in organisms which lack either or both of asparaginyl-tRNA or glutaminyl-tRNA synthetases. The reaction takes place in the presence of glutamine and ATP through an activated phospho-Asp-tRNA(Asn) or phospho-Glu-tRNA(Gln). This Herpetosiphon aurantiacus (strain ATCC 23779 / DSM 785 / 114-95) protein is Aspartyl/glutamyl-tRNA(Asn/Gln) amidotransferase subunit B.